Consider the following 272-residue polypeptide: Exosome complex component MTR3 (272 aa).

Residues 1–36 (MPGDHRRIRGPEESQPPQLYAADEEEAPGTRDPTRL) are disordered.

This sequence belongs to the RNase PH family. In terms of assembly, component of the RNA exosome core complex (Exo-9), composed of EXOSC1, EXOSC2, EXOSC3, EXOSC4, EXOSC5, EXOSC6, EXOSC7, EXOSC8 and EXOSC9; within the complex interacts with EXOSC1, EXOSC7 and EXOSC8. The catalytically inactive Exo-9 may associate with the catalytic subunit EXOSC10/RRP6. Exo-9 may associate with DIS3 to form the nucleolar exosome complex, or DIS3L to form the cytoplasmic exosome complex. Exo-9 is formed by a hexameric base ring consisting of the heterodimers EXOSC4-EXOSC9, EXOSC5-EXOSC8 and EXOSC6-EXOSC7, and a cap ring consisting of EXOSC1, EXOSC2 and EXOSC3. The RNA exosome complex associates with cofactors EXOSC10/RRP6, C1D/RRP47, MPHOSPH6/MPP6 and MTREX/MTR4.

Its subcellular location is the cytoplasm. It is found in the nucleus. The protein localises to the nucleolus. In terms of biological role, non-catalytic component of the RNA exosome complex which has 3'-&gt;5' exoribonuclease activity and participates in a multitude of cellular RNA processing and degradation events. In the nucleus, the RNA exosome complex is involved in proper maturation of stable RNA species such as rRNA, snRNA and snoRNA, in the elimination of RNA processing by-products and non-coding 'pervasive' transcripts, such as antisense RNA species and promoter-upstream transcripts (PROMPTs), and of mRNAs with processing defects, thereby limiting or excluding their export to the cytoplasm. The RNA exosome may be involved in Ig class switch recombination (CSR) and/or Ig variable region somatic hypermutation (SHM) by targeting AICDA deamination activity to transcribed dsDNA substrates. In the cytoplasm, the RNA exosome complex is involved in general mRNA turnover and specifically degrades inherently unstable mRNAs containing AU-rich elements (AREs) within their 3' untranslated regions, and in RNA surveillance pathways, preventing translation of aberrant mRNAs. It seems to be involved in degradation of histone mRNA. The catalytic inactive RNA exosome core complex of 9 subunits (Exo-9) is proposed to play a pivotal role in the binding and presentation of RNA for ribonucleolysis, and to serve as a scaffold for the association with catalytic subunits and accessory proteins or complexes. In Homo sapiens (Human), this protein is Exosome complex component MTR3 (EXOSC6).